A 250-amino-acid polypeptide reads, in one-letter code: MANQRPIYGFHAVNARLWQNPKSIVELYIQEGKSDARTREVLEKAANENIRVYFADADRLNAISKGARHQGVVGFIDASKNHVHLEDVLENLSEPPLLLILDGITDPHNLGACLRTADAMGVHAVIAPKDKSAGLNATVSKVACGAAETVPYITVTNLARTLRELKEYGIWIIGTDMSGESDLYHCNLPDSAAWVMGNEGDGMRRLTREHCDMLVSIPMFGTVESMNVSVSAGMVLSETRRQRVLKNEKV.

The S-adenosyl-L-methionine site is built by glycine 197, isoleucine 217, and methionine 226.

The protein belongs to the class IV-like SAM-binding methyltransferase superfamily. RNA methyltransferase TrmH family. RlmB subfamily.

The protein localises to the cytoplasm. It carries out the reaction guanosine(2251) in 23S rRNA + S-adenosyl-L-methionine = 2'-O-methylguanosine(2251) in 23S rRNA + S-adenosyl-L-homocysteine + H(+). Specifically methylates the ribose of guanosine 2251 in 23S rRNA. The sequence is that of 23S rRNA (guanosine-2'-O-)-methyltransferase RlmB from Neisseria meningitidis serogroup B (strain ATCC BAA-335 / MC58).